The primary structure comprises 325 residues: Tetraacyldisaccharide 4'-kinase (325 aa).

Position 55-62 (55-62 (TAGGNGKT)) interacts with ATP.

The protein belongs to the LpxK family.

The enzyme catalyses a lipid A disaccharide + ATP = a lipid IVA + ADP + H(+). Its pathway is glycolipid biosynthesis; lipid IV(A) biosynthesis; lipid IV(A) from (3R)-3-hydroxytetradecanoyl-[acyl-carrier-protein] and UDP-N-acetyl-alpha-D-glucosamine: step 6/6. In terms of biological role, transfers the gamma-phosphate of ATP to the 4'-position of a tetraacyldisaccharide 1-phosphate intermediate (termed DS-1-P) to form tetraacyldisaccharide 1,4'-bis-phosphate (lipid IVA). The sequence is that of Tetraacyldisaccharide 4'-kinase from Enterobacter sp. (strain 638).